Consider the following 414-residue polypeptide: Serine hydroxymethyltransferase (414 aa).

Residues leucine 121 and 125-127 contribute to the (6S)-5,6,7,8-tetrahydrofolate site; that span reads GHL. An N6-(pyridoxal phosphate)lysine modification is found at lysine 229.

Belongs to the SHMT family. Homodimer. The cofactor is pyridoxal 5'-phosphate.

It is found in the cytoplasm. It carries out the reaction (6R)-5,10-methylene-5,6,7,8-tetrahydrofolate + glycine + H2O = (6S)-5,6,7,8-tetrahydrofolate + L-serine. Its pathway is one-carbon metabolism; tetrahydrofolate interconversion. It participates in amino-acid biosynthesis; glycine biosynthesis; glycine from L-serine: step 1/1. Catalyzes the reversible interconversion of serine and glycine with tetrahydrofolate (THF) serving as the one-carbon carrier. This reaction serves as the major source of one-carbon groups required for the biosynthesis of purines, thymidylate, methionine, and other important biomolecules. Also exhibits THF-independent aldolase activity toward beta-hydroxyamino acids, producing glycine and aldehydes, via a retro-aldol mechanism. This is Serine hydroxymethyltransferase from Verminephrobacter eiseniae (strain EF01-2).